We begin with the raw amino-acid sequence, 469 residues long: MKTAKEVLDFIKSNDVKYVDLRFTDPRGKWQHVTFDITMVDEDFFAEGQAFDGSSIAGWKAINESDMLLMPDVTTACVDPFFSETTLSVVCDVLEPTTGEPYGRDPRGIAKKAMAYLQSTGIGDTVFFGPEAEFFIFDDVKFKADPYNTGFKLDSIELPTNGDTDYEGGNLGHRIKTKGGYFPVPPLDSAQDMRSEMLASMAKMGAKVEKHHHEVASAQHELGLKFGQLVTMADHLQVYKYCIHQVANIYGKTATFMPKPVYGDNGSGMHVHQSIWKDGKPLFAGDKYADLSQECLWYIGGVIKHAKSLNAFTNPLTNSYKRLVPGYEAPVLLAYSARNRSASCRIPYTNNPKAKRVEVRFPDPGANPYLAFSALFMAGMDGILNKIDPGSAMDKDLYDLPPAELKQIPTVCGSLREALESLAKDHDYLLKGDVFQKDFIESYIDLKMQEVARFEMTPHPVEFEMYYSV.

A GS beta-grasp domain is found at 14–98 (NDVKYVDLRF…VVCDVLEPTT (85 aa)). The GS catalytic domain maps to 106–469 (PRGIAKKAMA…PVEFEMYYSV (364 aa)). 2 residues coordinate Mg(2+): Glu-131 and Glu-133. ATP is bound at residue Glu-209. Mg(2+) is bound by residues Glu-214 and Glu-221. L-glutamate-binding positions include 265–266 (NG) and Gly-266. His-270 contributes to the Mg(2+) binding site. ATP contacts are provided by residues 272 to 274 (HQS) and Ser-274. L-glutamate-binding residues include Arg-322, Glu-328, and Arg-340. The ATP site is built by Arg-340, Arg-345, and Lys-353. Glu-358 provides a ligand contact to Mg(2+). Arg-360 serves as a coordination point for L-glutamate. Tyr-398 is modified (O-AMP-tyrosine).

Belongs to the glutamine synthetase family. As to quaternary structure, oligomer of 12 subunits arranged in the form of two hexameric ring. It depends on Mg(2+) as a cofactor.

It is found in the cytoplasm. It carries out the reaction L-glutamate + NH4(+) + ATP = L-glutamine + ADP + phosphate + H(+). With respect to regulation, the activity of this enzyme could be controlled by adenylation under conditions of abundant glutamine. Its function is as follows. Catalyzes the ATP-dependent biosynthesis of glutamine from glutamate and ammonia. In Azorhizobium caulinodans (strain ATCC 43989 / DSM 5975 / JCM 20966 / LMG 6465 / NBRC 14845 / NCIMB 13405 / ORS 571), this protein is Glutamine synthetase.